A 119-amino-acid chain; its full sequence is Large ribosomal subunit protein bL20 (119 aa).

It belongs to the bacterial ribosomal protein bL20 family.

Its function is as follows. Binds directly to 23S ribosomal RNA and is necessary for the in vitro assembly process of the 50S ribosomal subunit. It is not involved in the protein synthesizing functions of that subunit. This Burkholderia ambifaria (strain MC40-6) protein is Large ribosomal subunit protein bL20.